A 167-amino-acid chain; its full sequence is NADH-quinone oxidoreductase subunit B 2 (167 aa).

[4Fe-4S] cluster-binding residues include C38, C39, C103, and C132.

This sequence belongs to the complex I 20 kDa subunit family. In terms of assembly, NDH-1 is composed of 14 different subunits. Subunits NuoB, C, D, E, F, and G constitute the peripheral sector of the complex. [4Fe-4S] cluster is required as a cofactor.

Its subcellular location is the cell inner membrane. It carries out the reaction a quinone + NADH + 5 H(+)(in) = a quinol + NAD(+) + 4 H(+)(out). In terms of biological role, NDH-1 shuttles electrons from NADH, via FMN and iron-sulfur (Fe-S) centers, to quinones in the respiratory chain. The immediate electron acceptor for the enzyme in this species is believed to be ubiquinone. Couples the redox reaction to proton translocation (for every two electrons transferred, four hydrogen ions are translocated across the cytoplasmic membrane), and thus conserves the redox energy in a proton gradient. The polypeptide is NADH-quinone oxidoreductase subunit B 2 (Rhizobium meliloti (strain 1021) (Ensifer meliloti)).